Consider the following 345-residue polypeptide: Neuropeptide receptor 15 (345 aa).

The Extracellular portion of the chain corresponds to 1–11 (MSVAVGIPYVC). Residues 12 to 32 (FFIILSVVGIIGNVIVIYAIA) traverse the membrane as a helical segment. The Cytoplasmic segment spans residues 33–40 (GDRNMRKS). A helical membrane pass occupies residues 41–61 (VMNILLLNLAVADLANLIFTI). Residues 62–90 (PEWIPPVFFGSTDWLFPSFLCPVCRYLEC) are Extracellular-facing. Cys82 and Cys171 form a disulfide bridge. The chain crosses the membrane as a helical span at residues 91–111 (VFLFASISTQMIVCIERYIAI). The Cytoplasmic portion of the chain corresponds to 112–125 (VLPMQARQLCSRRN). Residues 126–146 (VLITVLVDWIFVACFASPYAV) traverse the membrane as a helical segment. At 147–187 (WHSVKTKDRNTNSLRFKLFQLSATCSNTVGKSTWWQGYKLT) the chain is on the extracellular side. The helical transmembrane segment at 188–208 (EFLAFYFVPCFIITVVYTKVA) threads the bilayer. At 209–246 (KCLWCKDPTLQCETRSCLDNKSSSRSSDALRTRRNVVK) the chain is on the cytoplasmic side. The chain crosses the membrane as a helical span at residues 247–267 (MLIACVAVYFVCYSPIQVIFL). Residues 268-281 (SKAVLNVTIHPPYD) are Extracellular-facing. A helical membrane pass occupies residues 282 to 304 (FILLMNALAMTCSASNPLLYTLF). Topologically, residues 305–345 (SQKFRRRLRDVLYCPSDVENETKTYYSINNTSIVGPRASFN) are cytoplasmic.

This sequence belongs to the G-protein coupled receptor 1 family. Expressed in pharyngeal muscle and AWC, ASG, ASE, ASI, and ASJ sensory neurons. Expressed in ASI neuron. Expressed in AFD neurons and in AVK interneuron.

The protein localises to the cell membrane. In terms of biological role, probable receptor for neuropeptide ligand nlp-8 that plays a role in octopamine signaling and specifically, the octopamine inhibition of aversion responses in olfactory sensory neurons. Plays a crucial role in daf-7 expression. Acts in concert with gpa-4 to activate TGF-beta-like daf-7 secretion in the ASI neuron, thereby promoting larval development and inhibition of dauer diapause. Suppresses immune response against pathogenic infection by inhibiting transcription regulators elt-2 and hlh-30 in ASJ neuron. Promotes pathogen avoidance behavior via intestinal gon-2, independent of aerotaxis. The chain is Neuropeptide receptor 15 (npr-15) from Caenorhabditis elegans.